Reading from the N-terminus, the 147-residue chain is Arginine vasopressin-induced protein 1 (147 aa).

Disordered regions lie at residues 1 to 24 (MGTPASVVSEPPPWQAPIEARGRK) and 104 to 147 (LANP…QIRH). Residues 105–119 (ANPQSATETASSEQY) show a composition bias toward polar residues. Basic residues predominate over residues 121–134 (HSRKKSARIRRNWR). Residues 137–147 (GPTSYLHQIRH) are compositionally biased toward polar residues.

May be involved in MAP kinase activation, epithelial sodium channel (ENaC) down-regulation and cell cycling. This Homo sapiens (Human) protein is Arginine vasopressin-induced protein 1 (AVPI1).